A 386-amino-acid polypeptide reads, in one-letter code: Lipoyl synthase, mitochondrial (386 aa).

Residues Cys-115, Cys-120, Cys-126, Cys-146, Cys-150, Cys-153, and Ser-362 each contribute to the [4Fe-4S] cluster site. The Radical SAM core domain occupies 131–351; it reads ETGTATATIM…QKLGMEMGFR (221 aa).

Belongs to the radical SAM superfamily. Lipoyl synthase family. It depends on [4Fe-4S] cluster as a cofactor.

The protein localises to the mitochondrion. The enzyme catalyses [[Fe-S] cluster scaffold protein carrying a second [4Fe-4S](2+) cluster] + N(6)-octanoyl-L-lysyl-[protein] + 2 oxidized [2Fe-2S]-[ferredoxin] + 2 S-adenosyl-L-methionine + 4 H(+) = [[Fe-S] cluster scaffold protein] + N(6)-[(R)-dihydrolipoyl]-L-lysyl-[protein] + 4 Fe(3+) + 2 hydrogen sulfide + 2 5'-deoxyadenosine + 2 L-methionine + 2 reduced [2Fe-2S]-[ferredoxin]. Its pathway is protein modification; protein lipoylation via endogenous pathway; protein N(6)-(lipoyl)lysine from octanoyl-[acyl-carrier-protein]: step 2/2. In terms of biological role, catalyzes the radical-mediated insertion of two sulfur atoms into the C-6 and C-8 positions of the octanoyl moiety bound to the lipoyl domains of lipoate-dependent enzymes, thereby converting the octanoylated domains into lipoylated derivatives. This Picea sitchensis (Sitka spruce) protein is Lipoyl synthase, mitochondrial.